Consider the following 334-residue polypeptide: uncharacterized protein (334 aa).

WD repeat units follow at residues 56-86 (LKGEAIIQIHYSQDGNYLLSTATDGLAKLWT), 98-128 (KPVAMIFNGAFSRDGKAIITAGYNGVARIWD), 139-169 (GHTSAVTDVVFLSDDMGVVTSSDDGTIEGWS), 220-250 (TDQGRLNDVDFSQDGKLLVTAGFDGTARVFN), and 262-291 (LDDGWVTGVAINQDNLIATVSDDGILRVWN).

This is an uncharacterized protein from Synechocystis sp. (strain ATCC 27184 / PCC 6803 / Kazusa).